Reading from the N-terminus, the 316-residue chain is 4-hydroxy-3-methylbut-2-enyl diphosphate reductase (316 aa).

Cys12 serves as a coordination point for [4Fe-4S] cluster. Residues His41 and His74 each contribute to the (2E)-4-hydroxy-3-methylbut-2-enyl diphosphate site. Residues His41 and His74 each contribute to the dimethylallyl diphosphate site. Residues His41 and His74 each coordinate isopentenyl diphosphate. A [4Fe-4S] cluster-binding site is contributed by Cys96. His124 is a binding site for (2E)-4-hydroxy-3-methylbut-2-enyl diphosphate. His124 contributes to the dimethylallyl diphosphate binding site. Isopentenyl diphosphate is bound at residue His124. Glu126 functions as the Proton donor in the catalytic mechanism. Thr167 contributes to the (2E)-4-hydroxy-3-methylbut-2-enyl diphosphate binding site. Cys197 contributes to the [4Fe-4S] cluster binding site. Positions 225, 226, 227, and 269 each coordinate (2E)-4-hydroxy-3-methylbut-2-enyl diphosphate. 4 residues coordinate dimethylallyl diphosphate: Ser225, Ser226, Asn227, and Ser269. Residues Ser225, Ser226, Asn227, and Ser269 each contribute to the isopentenyl diphosphate site.

Belongs to the IspH family. In terms of assembly, homodimer. It depends on [4Fe-4S] cluster as a cofactor.

It carries out the reaction isopentenyl diphosphate + 2 oxidized [2Fe-2S]-[ferredoxin] + H2O = (2E)-4-hydroxy-3-methylbut-2-enyl diphosphate + 2 reduced [2Fe-2S]-[ferredoxin] + 2 H(+). It catalyses the reaction dimethylallyl diphosphate + 2 oxidized [2Fe-2S]-[ferredoxin] + H2O = (2E)-4-hydroxy-3-methylbut-2-enyl diphosphate + 2 reduced [2Fe-2S]-[ferredoxin] + 2 H(+). Its pathway is isoprenoid biosynthesis; dimethylallyl diphosphate biosynthesis; dimethylallyl diphosphate from (2E)-4-hydroxy-3-methylbutenyl diphosphate: step 1/1. It functions in the pathway isoprenoid biosynthesis; isopentenyl diphosphate biosynthesis via DXP pathway; isopentenyl diphosphate from 1-deoxy-D-xylulose 5-phosphate: step 6/6. In terms of biological role, catalyzes the conversion of 1-hydroxy-2-methyl-2-(E)-butenyl 4-diphosphate (HMBPP) into a mixture of isopentenyl diphosphate (IPP) and dimethylallyl diphosphate (DMAPP). Acts in the terminal step of the DOXP/MEP pathway for isoprenoid precursor biosynthesis. This chain is 4-hydroxy-3-methylbut-2-enyl diphosphate reductase, found in Salmonella agona (strain SL483).